A 360-amino-acid polypeptide reads, in one-letter code: DNA replication and repair protein RecF (360 aa).

30-37 (GHNGSGKT) is an ATP binding site.

This sequence belongs to the RecF family.

It localises to the cytoplasm. The RecF protein is involved in DNA metabolism; it is required for DNA replication and normal SOS inducibility. RecF binds preferentially to single-stranded, linear DNA. It also seems to bind ATP. The polypeptide is DNA replication and repair protein RecF (Actinobacillus pleuropneumoniae serotype 7 (strain AP76)).